Here is a 170-residue protein sequence, read N- to C-terminus: Peptide deformylase (170 aa).

Fe cation contacts are provided by cysteine 88 and histidine 130. Residue glutamate 131 is part of the active site. Position 134 (histidine 134) interacts with Fe cation.

It belongs to the polypeptide deformylase family. The cofactor is Fe(2+).

The catalysed reaction is N-terminal N-formyl-L-methionyl-[peptide] + H2O = N-terminal L-methionyl-[peptide] + formate. Functionally, removes the formyl group from the N-terminal Met of newly synthesized proteins. Requires at least a dipeptide for an efficient rate of reaction. N-terminal L-methionine is a prerequisite for activity but the enzyme has broad specificity at other positions. The sequence is that of Peptide deformylase from Acetivibrio thermocellus (strain ATCC 27405 / DSM 1237 / JCM 9322 / NBRC 103400 / NCIMB 10682 / NRRL B-4536 / VPI 7372) (Clostridium thermocellum).